The primary structure comprises 348 residues: tRNA N6-adenosine threonylcarbamoyltransferase (348 aa).

Fe cation contacts are provided by His-116 and His-120. Substrate-binding positions include 138 to 142 (QVSGG), Asp-171, Gly-184, Asp-188, and Asn-277. Residue Asp-309 participates in Fe cation binding.

This sequence belongs to the KAE1 / TsaD family. Fe(2+) serves as cofactor.

It localises to the cytoplasm. The enzyme catalyses L-threonylcarbamoyladenylate + adenosine(37) in tRNA = N(6)-L-threonylcarbamoyladenosine(37) in tRNA + AMP + H(+). Required for the formation of a threonylcarbamoyl group on adenosine at position 37 (t(6)A37) in tRNAs that read codons beginning with adenine. Is involved in the transfer of the threonylcarbamoyl moiety of threonylcarbamoyl-AMP (TC-AMP) to the N6 group of A37, together with TsaE and TsaB. TsaD likely plays a direct catalytic role in this reaction. This is tRNA N6-adenosine threonylcarbamoyltransferase from Lactobacillus johnsonii (strain CNCM I-12250 / La1 / NCC 533).